A 66-amino-acid polypeptide reads, in one-letter code: Large ribosomal subunit protein bL31 (66 aa).

Residues cysteine 16, cysteine 18, cysteine 36, and cysteine 39 each coordinate Zn(2+).

The protein belongs to the bacterial ribosomal protein bL31 family. Type A subfamily. Part of the 50S ribosomal subunit. Zn(2+) is required as a cofactor.

In terms of biological role, binds the 23S rRNA. This is Large ribosomal subunit protein bL31 from Campylobacter curvus (strain 525.92).